A 490-amino-acid polypeptide reads, in one-letter code: Betaine aldehyde dehydrogenase (490 aa).

K(+) is bound at residue Asp-93. Gly-150–Trp-152 is an NAD(+) binding site. Catalysis depends on Lys-162, which acts as the Charge relay system. Position 176 to 179 (Lys-176 to Glu-179) interacts with NAD(+). Val-180 serves as a coordination point for K(+). Gly-230–Ser-233 lines the NAD(+) pocket. Leu-246 contacts K(+). Glu-252 (proton acceptor) is an active-site residue. The NAD(+) site is built by Gly-254, Cys-286, and Glu-387. The active-site Nucleophile is the Cys-286. A Cysteine sulfenic acid (-SOH) modification is found at Cys-286. K(+) contacts are provided by Lys-457 and Gly-460. The active-site Charge relay system is the Glu-464.

This sequence belongs to the aldehyde dehydrogenase family. As to quaternary structure, dimer of dimers. The cofactor is K(+).

It catalyses the reaction betaine aldehyde + NAD(+) + H2O = glycine betaine + NADH + 2 H(+). The protein operates within amine and polyamine biosynthesis; betaine biosynthesis via choline pathway; betaine from betaine aldehyde: step 1/1. Functionally, involved in the biosynthesis of the osmoprotectant glycine betaine. Catalyzes the irreversible oxidation of betaine aldehyde to the corresponding acid. This Pectobacterium carotovorum subsp. carotovorum (strain PC1) protein is Betaine aldehyde dehydrogenase.